The primary structure comprises 530 residues: Tyrosinase (530 aa).

Residues 1–17 (MLLAALYCLLWSFRTSA) form the signal peptide. Topologically, residues 19-473 (HFPRACASSK…IKPYLEQAQR (455 aa)) are lumenal, melanosome. An N-linked (GlcNAc...) asparagine glycan is attached at Asn-86. Cu cation is bound by residues His-180, His-202, and His-211. N-linked (GlcNAc...) asparagine glycans are attached at residues Asn-230, Asn-290, and Asn-337. Positions 363 and 367 each coordinate Cu cation. An N-linked (GlcNAc...) asparagine glycan is attached at Asn-371. His-390 contacts Cu cation. A helical membrane pass occupies residues 474–494 (IWPWLIGAAVVGSVLTAVLGG). Residues 495-530 (LTSLLCRRKRNQLPEEKQPLLMEKEDYHNLMYQSHL) lie on the Cytoplasmic side of the membrane.

It belongs to the tyrosinase family. As to quaternary structure, forms an OPN3-dependent complex with DCT in response to blue light in melanocytes. The cofactor is Cu(2+). In terms of processing, glycosylated.

Its subcellular location is the melanosome membrane. It is found in the melanosome. It catalyses the reaction 2 L-dopa + O2 = 2 L-dopaquinone + 2 H2O. The catalysed reaction is L-tyrosine + O2 = L-dopaquinone + H2O. It carries out the reaction 2 5,6-dihydroxyindole-2-carboxylate + O2 = 2 indole-5,6-quinone-2-carboxylate + 2 H2O. Functionally, this is a copper-containing oxidase that functions in the formation of pigments such as melanins and other polyphenolic compounds. Catalyzes the initial and rate limiting step in the cascade of reactions leading to melanin production from tyrosine. In addition to hydroxylating tyrosine to DOPA (3,4-dihydroxyphenylalanine), also catalyzes the oxidation of DOPA to DOPA-quinone, and possibly the oxidation of DHI (5,6-dihydroxyindole) to indole-5,6 quinone. In Bos taurus (Bovine), this protein is Tyrosinase (TYR).